A 136-amino-acid chain; its full sequence is Nucleoside diphosphate kinase (136 aa).

Residues lysine 9, phenylalanine 57, arginine 85, threonine 91, arginine 102, and asparagine 112 each coordinate ATP. Residue histidine 115 is the Pros-phosphohistidine intermediate of the active site.

It belongs to the NDK family. As to quaternary structure, homotetramer. The cofactor is Mg(2+).

It is found in the cytoplasm. The enzyme catalyses a 2'-deoxyribonucleoside 5'-diphosphate + ATP = a 2'-deoxyribonucleoside 5'-triphosphate + ADP. It carries out the reaction a ribonucleoside 5'-diphosphate + ATP = a ribonucleoside 5'-triphosphate + ADP. Functionally, major role in the synthesis of nucleoside triphosphates other than ATP. The ATP gamma phosphate is transferred to the NDP beta phosphate via a ping-pong mechanism, using a phosphorylated active-site intermediate. The protein is Nucleoside diphosphate kinase of Acetivibrio thermocellus (strain ATCC 27405 / DSM 1237 / JCM 9322 / NBRC 103400 / NCIMB 10682 / NRRL B-4536 / VPI 7372) (Clostridium thermocellum).